The chain runs to 303 residues: Lipoyl synthase (303 aa).

[4Fe-4S] cluster-binding residues include Cys-34, Cys-39, Cys-45, Cys-60, Cys-64, Cys-67, and Ser-273. Positions 46-262 (WSKKHATVMI…ERVARTKGFL (217 aa)) constitute a Radical SAM core domain.

This sequence belongs to the radical SAM superfamily. Lipoyl synthase family. [4Fe-4S] cluster serves as cofactor.

The protein localises to the cytoplasm. The catalysed reaction is [[Fe-S] cluster scaffold protein carrying a second [4Fe-4S](2+) cluster] + N(6)-octanoyl-L-lysyl-[protein] + 2 oxidized [2Fe-2S]-[ferredoxin] + 2 S-adenosyl-L-methionine + 4 H(+) = [[Fe-S] cluster scaffold protein] + N(6)-[(R)-dihydrolipoyl]-L-lysyl-[protein] + 4 Fe(3+) + 2 hydrogen sulfide + 2 5'-deoxyadenosine + 2 L-methionine + 2 reduced [2Fe-2S]-[ferredoxin]. It functions in the pathway protein modification; protein lipoylation via endogenous pathway; protein N(6)-(lipoyl)lysine from octanoyl-[acyl-carrier-protein]: step 2/2. Functionally, catalyzes the radical-mediated insertion of two sulfur atoms into the C-6 and C-8 positions of the octanoyl moiety bound to the lipoyl domains of lipoate-dependent enzymes, thereby converting the octanoylated domains into lipoylated derivatives. This Rickettsia bellii (strain OSU 85-389) protein is Lipoyl synthase.